The sequence spans 258 residues: MLSLCLMAALLLAAGPGPSLGDEAIHCPPCSEEKLARCRPPVGCEELVREPGCGCCATCALGKGMPCGVYTPRCGSGLRCYPPRGVEKPLHTLVHGQGVCMELAEIEAIQESLQPSDKDEGDHPNNSFSPCSAHDRKCLQKHLAKIRDRSTSGGKMKVIGAPREEARPVPQGSCQSELHRALERLAASQSRTHEDLYIIPIPNCDRNGNFHPKQCHPALDGQRGKCWCVDRKTGVKLPGGLEPKGELDCHQLADSFRE.

A signal peptide spans 1-21 (MLSLCLMAALLLAAGPGPSLG). The IGFBP N-terminal domain occupies 23–103 (EAIHCPPCSE…VHGQGVCMEL (81 aa)). 6 disulfides stabilise this stretch: Cys-27/Cys-53, Cys-30/Cys-55, Cys-38/Cys-56, Cys-44/Cys-59, Cys-67/Cys-80, and Cys-74/Cys-100. N-linked (GlcNAc...) asparagine glycosylation is present at Asn-125. Cystine bridges form between Cys-131–Cys-138, Cys-174–Cys-204, Cys-215–Cys-226, and Cys-228–Cys-249. Positions 171–249 (QGSCQSELHR…GLEPKGELDC (79 aa)) constitute a Thyroglobulin type-1 domain. Residue Ser-255 is modified to Phosphoserine.

In terms of assembly, binds IGF2 more than IGF1.

It localises to the secreted. IGF-binding proteins prolong the half-life of the IGFs and have been shown to either inhibit or stimulate the growth promoting effects of the IGFs on cell culture. They alter the interaction of IGFs with their cell surface receptors. The polypeptide is Insulin-like growth factor-binding protein 4 (IGFBP4) (Bos taurus (Bovine)).